A 432-amino-acid polypeptide reads, in one-letter code: Enolase (432 aa).

Gln167 serves as a coordination point for (2R)-2-phosphoglycerate. Catalysis depends on Glu209, which acts as the Proton donor. Asp246, Glu291, and Asp318 together coordinate Mg(2+). Residues Lys343, Arg372, Ser373, and Lys394 each coordinate (2R)-2-phosphoglycerate. Lys343 serves as the catalytic Proton acceptor.

This sequence belongs to the enolase family. Component of the RNA degradosome, a multiprotein complex involved in RNA processing and mRNA degradation. Mg(2+) serves as cofactor.

The protein resides in the cytoplasm. The protein localises to the secreted. Its subcellular location is the cell surface. It catalyses the reaction (2R)-2-phosphoglycerate = phosphoenolpyruvate + H2O. Its pathway is carbohydrate degradation; glycolysis; pyruvate from D-glyceraldehyde 3-phosphate: step 4/5. Its function is as follows. Catalyzes the reversible conversion of 2-phosphoglycerate (2-PG) into phosphoenolpyruvate (PEP). It is essential for the degradation of carbohydrates via glycolysis. This chain is Enolase, found in Colwellia psychrerythraea (strain 34H / ATCC BAA-681) (Vibrio psychroerythus).